We begin with the raw amino-acid sequence, 130 residues long: Large ribosomal subunit protein uL22 (130 aa).

This sequence belongs to the universal ribosomal protein uL22 family. In terms of assembly, part of the 50S ribosomal subunit.

Functionally, this protein binds specifically to 23S rRNA; its binding is stimulated by other ribosomal proteins, e.g. L4, L17, and L20. It is important during the early stages of 50S assembly. It makes multiple contacts with different domains of the 23S rRNA in the assembled 50S subunit and ribosome. The globular domain of the protein is located near the polypeptide exit tunnel on the outside of the subunit, while an extended beta-hairpin is found that lines the wall of the exit tunnel in the center of the 70S ribosome. This Clavibacter michiganensis subsp. michiganensis (strain NCPPB 382) protein is Large ribosomal subunit protein uL22.